The chain runs to 439 residues: ATP-dependent RNA helicase SrmB (439 aa).

The short motif at 4–32 (SQFEQFDLSPELLKALEKKGYSRPTAIQM) is the Q motif element. The Helicase ATP-binding domain occupies 35-209 (IPAAMEESDV…AERLLNDPVK (175 aa)). 48-55 (APTGTGKT) lines the ATP pocket. The DEAD box signature appears at 157-160 (DEAD). Residues 237–387 (KLLARFIETE…GLEPRTKPPK (151 aa)) form the Helicase C-terminal domain. A compositionally biased stretch (basic and acidic residues) spans 381–393 (PRTKPPKDGEVKS). A disordered region spans residues 381–439 (PRTKPPKDGEVKSVSKKQKARIKEKREEKKKTEAKKKVKLRHKDTKNIGKRRKPSNSNV). 2 stretches are compositionally biased toward basic residues: residues 394-403 (VSKKQKARIK) and 412-439 (TEAK…NSNV).

This sequence belongs to the DEAD box helicase family. SrmB subfamily. In terms of assembly, interacts with the 50S ribosomal subunit.

It is found in the cytoplasm. The enzyme catalyses ATP + H2O = ADP + phosphate + H(+). In terms of biological role, DEAD-box RNA helicase involved in the assembly of the 50S ribosomal subunit at low temperature. Exhibits RNA-stimulated ATP hydrolysis and RNA unwinding activity. The sequence is that of ATP-dependent RNA helicase SrmB from Haemophilus influenzae (strain ATCC 51907 / DSM 11121 / KW20 / Rd).